The sequence spans 734 residues: Putative protocadherin beta-18 (734 aa).

Cadherin domains follow at residues 1–79 (MWKT…TPTF), 80–188 (LNNH…APEF), 189–293 (EKPV…PPEI), 294–398 (AMTS…APIF), and 399–508 (TQTS…SPFV). N-linked (GlcNAc...) asparagine glycosylation occurs at N115. Residues N365 and N383 are each glycosylated (N-linked (GlcNAc...) asparagine). N-linked (GlcNAc...) asparagine glycosylation is present at N514. Positions 515–621 (GSAPCTELVP…GFSQPYLPLT (107 aa)) constitute a Cadherin 6 domain. A helical transmembrane segment spans residues 638–658 (VVALASVSSLFLFSVFLFVAV).

It localises to the cell membrane. Functionally, potential calcium-dependent cell-adhesion protein. This Homo sapiens (Human) protein is Putative protocadherin beta-18 (PCDHB18P).